A 347-amino-acid polypeptide reads, in one-letter code: NADH-quinone oxidoreductase subunit H (347 aa).

8 helical membrane-spanning segments follow: residues 13–33, 82–102, 115–135, 161–181, 198–218, 258–278, 286–306, and 321–341; these read LIMIGQSLLLLVCLLVFIAYI, AVFLLAPLVSVVLALSTWAVV, VGILYILAISSLEVYGIIMGG, IGLVIVTVLLCVGSLNLTDIV, FLDWHWLSLFPMFIVFFISAL, AVVLMCSLTTILFLGGWLPPV, VPGIIWFMLKACFVFFMFAMV, and LGWKVFLPLSLAMVVIVAFVL.

This sequence belongs to the complex I subunit 1 family. In terms of assembly, NDH-1 is composed of 14 different subunits. Subunits NuoA, H, J, K, L, M, N constitute the membrane sector of the complex.

Its subcellular location is the cell inner membrane. The catalysed reaction is a quinone + NADH + 5 H(+)(in) = a quinol + NAD(+) + 4 H(+)(out). NDH-1 shuttles electrons from NADH, via FMN and iron-sulfur (Fe-S) centers, to quinones in the respiratory chain. The immediate electron acceptor for the enzyme in this species is believed to be ubiquinone. Couples the redox reaction to proton translocation (for every two electrons transferred, four hydrogen ions are translocated across the cytoplasmic membrane), and thus conserves the redox energy in a proton gradient. This subunit may bind ubiquinone. In Rhizobium rhizogenes (strain K84 / ATCC BAA-868) (Agrobacterium radiobacter), this protein is NADH-quinone oxidoreductase subunit H.